A 346-amino-acid polypeptide reads, in one-letter code: MAHRARWTMSQVTELFNKPLIDLLFEAQQIHRQHFDPRQVQVSTLLSIKTGACPEDCKYCPQSARYKTGLETERLMEVEQVLESARQAKNAGSTRFCMGAAWKNPNDRDMPYLEQMVKGVKALGLESCMTLGTLTDSQAQRLAGAGLDYYNHNLDTSPEFYGNIITTRTYQERLDTLDKVRDAGIKVCSGGIVGLGETVKDRAGLLLQLANLPTPPESVPINMLVKVKGTPLADNDDVDAFDFIRTIAIARIMMPTSYVRLSAGREQMNEQTQAMCFMAGANSIFYGCKLLTTPNPEEDKDLQLFRKLGINPQQTAVLEGDNEQQQRLEQALLTPDTEEYYNAAAL.

In terms of domain architecture, Radical SAM core spans R38 to T256. Residues C53, C57, and C60 each coordinate [4Fe-4S] cluster. [2Fe-2S] cluster contacts are provided by C97, C128, C188, and R260.

This sequence belongs to the radical SAM superfamily. Biotin synthase family. In terms of assembly, homodimer. The cofactor is [4Fe-4S] cluster. [2Fe-2S] cluster serves as cofactor.

It catalyses the reaction (4R,5S)-dethiobiotin + (sulfur carrier)-SH + 2 reduced [2Fe-2S]-[ferredoxin] + 2 S-adenosyl-L-methionine = (sulfur carrier)-H + biotin + 2 5'-deoxyadenosine + 2 L-methionine + 2 oxidized [2Fe-2S]-[ferredoxin]. The protein operates within cofactor biosynthesis; biotin biosynthesis; biotin from 7,8-diaminononanoate: step 2/2. Its function is as follows. Catalyzes the conversion of dethiobiotin (DTB) to biotin by the insertion of a sulfur atom into dethiobiotin via a radical-based mechanism. This Klebsiella pneumoniae (strain 342) protein is Biotin synthase.